Reading from the N-terminus, the 363-residue chain is Inositol-3-phosphate synthase (363 aa).

Residue lysine 65 forms an Isoglutamyl lysine isopeptide (Lys-Gln) (interchain with Q-Cter in protein Pup) linkage. Residues aspartate 70, alanine 129, tyrosine 149, serine 192, aspartate 227, and lysine 240 each contribute to the NAD(+) site.

The protein belongs to the myo-inositol 1-phosphate synthase family. The cofactor is NAD(+). In terms of processing, pupylated at Lys-65 by the prokaryotic ubiquitin-like protein Pup, which leads to its degradation by the proteasome.

It catalyses the reaction D-glucose 6-phosphate = 1D-myo-inositol 3-phosphate. Functionally, key enzyme in myo-inositol biosynthesis pathway that catalyzes the conversion of glucose 6-phosphate to 1D-myo-inositol 3-phosphate in a NAD-dependent manner. The chain is Inositol-3-phosphate synthase (ino1) from Mycolicibacterium smegmatis (strain ATCC 700084 / mc(2)155) (Mycobacterium smegmatis).